The following is a 152-amino-acid chain: Protein SprT-like (152 aa).

The SprT-like domain occupies 7 to 148; the sequence is QRLVEEVSLQ…GKCKGKLNLI (142 aa). Zn(2+) is bound at residue H67. The active site involves E68. Residue H71 participates in Zn(2+) binding.

The protein belongs to the SprT family. Zn(2+) is required as a cofactor.

It localises to the cytoplasm. This is Protein SprT-like from Bacillus anthracis (strain A0248).